Here is a 394-residue protein sequence, read N- to C-terminus: Cell division protein FtsZ (394 aa).

GTP is bound by residues 21–25 (GGGNN), 108–110 (GTG), glutamate 139, arginine 143, and aspartate 187. Residues 317-394 (DKPSSQGRKA…EERRSRRTRR (78 aa)) form a disordered region. Low complexity-rich tracts occupy residues 328 to 346 (STGFGSSVNSSSNHQSGAS) and 353 to 364 (SAHTSHSQSSES). Positions 365–388 (VNERSHTTKDDDIPSFIRNREERR) are enriched in basic and acidic residues.

It belongs to the FtsZ family. As to quaternary structure, homodimer. Polymerizes to form a dynamic ring structure in a strictly GTP-dependent manner. Interacts directly with several other division proteins.

The protein resides in the cytoplasm. Its function is as follows. Essential cell division protein that forms a contractile ring structure (Z ring) at the future cell division site. The regulation of the ring assembly controls the timing and the location of cell division. One of the functions of the FtsZ ring is to recruit other cell division proteins to the septum to produce a new cell wall between the dividing cells. Binds GTP and shows GTPase activity. This chain is Cell division protein FtsZ, found in Staphylococcus epidermidis (strain ATCC 12228 / FDA PCI 1200).